The following is a 527-amino-acid chain: FAD-dependent monooxygenase CTB5 (527 aa).

The FAD-binding PCMH-type domain occupies 78-255 (SDLHPSCIAL…TAVTLKTFGQ (178 aa)).

Belongs to the oxygen-dependent FAD-linked oxidoreductase family.

The protein operates within mycotoxin biosynthesis. FAD-dependent monooxygenase; part of the gene cluster that mediates the biosynthesis of cercosporin, a light-activated, non-host-selective toxin. The perylenequinone chromophore of cercosporin absorbs light energy to attain an electronically-activated triplet state and produces active oxygen species such as the hydroxyl radical, superoxide, hydrogen peroxide or singlet oxygen upon reaction with oxygen molecules. These reactive oxygen species cause damage to various cellular components including lipids, proteins and nucleic acids. The first step of cercosporin biosynthesis is performed by the polyketide synthase CTB1 which catalyzes the formation of nor-toralactone. The starter unit acyltransferase (SAT) domain of CTB1 initiates polyketide extension by the selective utilization of acetyl-CoA, which is elongated to the heptaketide in the beta-ketoacyl synthase (KS) domain by successive condensations with six malonyl units introduced by the malonyl acyltransferase (MAT) domain. The product template (PT) domain catalyzes C4-C9 and C2-C11 aldol cyclizations and dehydrations to a trihydroxynaphthalene, which is thought to be delivered to the thioesterase (TE) domain for product release. The bifunctional enzyme CTB3 then methylates nor-toralactone to toralactone before conducting an unusual oxidative aromatic ring opening. The O-methyltransferase CTB2 further methylates the nascent OH-6 of the CBT3 product, blocking further oxidation at this site before the reductase CTB6 reduces the 2-oxopropyl ketone at position C7, giving naphthalene. The FAD-dependent monooxygenase CTB5 in concert with the multicopper oxidase CTB12 are responsible for homodimerization of naphthalene with CTB7 installing the dioxepine moiety, finally producing cercosporin. The fasciclin domain-containing protein CTB11 might act with CTB5 and CTB12 whereas the roles of CTB9 and CTB10 have still to be elucidated. This chain is FAD-dependent monooxygenase CTB5, found in Cercospora beticola (Sugarbeet leaf spot fungus).